The sequence spans 78 residues: D-alanyl carrier protein (78 aa).

The Carrier domain occupies 1 to 78 (MEFREQVLDL…KIVEALEELK (78 aa)). Ser-36 carries the O-(pantetheine 4'-phosphoryl)serine modification.

The protein belongs to the DltC family. 4'-phosphopantetheine is transferred from CoA to a specific serine of apo-DCP.

The protein localises to the cytoplasm. It participates in cell wall biogenesis; lipoteichoic acid biosynthesis. Its function is as follows. Carrier protein involved in the D-alanylation of lipoteichoic acid (LTA). The loading of thioester-linked D-alanine onto DltC is catalyzed by D-alanine--D-alanyl carrier protein ligase DltA. The DltC-carried D-alanyl group is further transferred to cell membrane phosphatidylglycerol (PG) by forming an ester bond, probably catalyzed by DltD. D-alanylation of LTA plays an important role in modulating the properties of the cell wall in Gram-positive bacteria, influencing the net charge of the cell wall. This chain is D-alanyl carrier protein, found in Staphylococcus carnosus (strain TM300).